The sequence spans 364 residues: Aminomethyltransferase (364 aa).

It belongs to the GcvT family. In terms of assembly, the glycine cleavage system is composed of four proteins: P, T, L and H.

It carries out the reaction N(6)-[(R)-S(8)-aminomethyldihydrolipoyl]-L-lysyl-[protein] + (6S)-5,6,7,8-tetrahydrofolate = N(6)-[(R)-dihydrolipoyl]-L-lysyl-[protein] + (6R)-5,10-methylene-5,6,7,8-tetrahydrofolate + NH4(+). The glycine cleavage system catalyzes the degradation of glycine. In Escherichia coli O81 (strain ED1a), this protein is Aminomethyltransferase.